We begin with the raw amino-acid sequence, 228 residues long: Urease accessory protein UreF (228 aa).

The protein belongs to the UreF family. As to quaternary structure, ureD, UreF and UreG form a complex that acts as a GTP-hydrolysis-dependent molecular chaperone, activating the urease apoprotein by helping to assemble the nickel containing metallocenter of UreC. The UreE protein probably delivers the nickel.

It is found in the cytoplasm. In terms of biological role, required for maturation of urease via the functional incorporation of the urease nickel metallocenter. This is Urease accessory protein UreF from Alkalilimnicola ehrlichii (strain ATCC BAA-1101 / DSM 17681 / MLHE-1).